We begin with the raw amino-acid sequence, 198 residues long: Protein GrpE (198 aa).

The protein belongs to the GrpE family. In terms of assembly, homodimer.

Its subcellular location is the cytoplasm. Its function is as follows. Participates actively in the response to hyperosmotic and heat shock by preventing the aggregation of stress-denatured proteins, in association with DnaK and GrpE. It is the nucleotide exchange factor for DnaK and may function as a thermosensor. Unfolded proteins bind initially to DnaJ; upon interaction with the DnaJ-bound protein, DnaK hydrolyzes its bound ATP, resulting in the formation of a stable complex. GrpE releases ADP from DnaK; ATP binding to DnaK triggers the release of the substrate protein, thus completing the reaction cycle. Several rounds of ATP-dependent interactions between DnaJ, DnaK and GrpE are required for fully efficient folding. This Actinobacillus pleuropneumoniae serotype 3 (strain JL03) protein is Protein GrpE.